Here is a 136-residue protein sequence, read N- to C-terminus: Keratin-associated protein 4-2 (136 aa).

20 consecutive repeat copies span residues 5–9 (CCGSV), 20–24 (CCRPS), 25–29 (CCQTT), 30–34 (CCRTT), 35–39 (CCRPS), 40–44 (CCVSS), 45–49 (CCRPQ), 50–54 (CCQSV), 55–59 (CCQPT), 60–64 (CCSPS), 65–69 (CCQTT), 70–74 (CCRTT), 75–79 (CCRPS), 80–84 (CCVSS), 90–94 (CCQSV), 95–99 (YCQPT), 100–104 (CCRPS), 110–114 (CCRTT), 120–124 (CCVST), and 125–129 (CCRPT). Residues 5–129 (CCGSVCSDQG…CCVSTCCRPT (125 aa)) form a 20 X 5 AA repeats OF C-C-[GRQVS]-[SPT]-[VSTQ] region.

This sequence belongs to the KRTAP type 4 family. As to quaternary structure, interacts with hair keratins.

In the hair cortex, hair keratin intermediate filaments are embedded in an interfilamentous matrix, consisting of hair keratin-associated proteins (KRTAP), which are essential for the formation of a rigid and resistant hair shaft through their extensive disulfide bond cross-linking with abundant cysteine residues of hair keratins. The matrix proteins include the high-sulfur and high-glycine-tyrosine keratins. This Homo sapiens (Human) protein is Keratin-associated protein 4-2 (KRTAP4-2).